A 153-amino-acid polypeptide reads, in one-letter code: MADAARAARLADRIKVIVAQALERRVKDPRLGFVTVTDARVTNDLQHATLYYTVYGDEEQRADTARALESAKGVLRAEVGKNITARLTPTLTFVADEIPADAARLEELLRTAREKDAQVAEQAQGAQYAAGEDAYRTPSDEDDAEGPESAPRV.

The interval 116–153 (DAQVAEQAQGAQYAAGEDAYRTPSDEDDAEGPESAPRV) is disordered. A compositionally biased stretch (low complexity) spans 119–132 (VAEQAQGAQYAAGE).

The protein belongs to the RbfA family. Monomer. Binds 30S ribosomal subunits, but not 50S ribosomal subunits or 70S ribosomes.

The protein localises to the cytoplasm. In terms of biological role, one of several proteins that assist in the late maturation steps of the functional core of the 30S ribosomal subunit. Associates with free 30S ribosomal subunits (but not with 30S subunits that are part of 70S ribosomes or polysomes). Required for efficient processing of 16S rRNA. May interact with the 5'-terminal helix region of 16S rRNA. This chain is Ribosome-binding factor A, found in Kocuria rhizophila (strain ATCC 9341 / DSM 348 / NBRC 103217 / DC2201).